The sequence spans 442 residues: Envelope glycoprotein D (442 aa).

An N-terminal signal peptide occupies residues 1 to 19 (MPAVLLVLYVNPPPSVCIL). The Virion surface portion of the chain corresponds to 20-405 (TQKLSLGLYN…NSTFVGISVG (386 aa)). N-linked (GlcNAc...) asparagine; by host glycosylation is found at Asn-103 and Asn-111. Cystine bridges form between Cys-138–Cys-259, Cys-176–Cys-273, and Cys-188–Cys-197. Residues 331-364 (PDNHPGFDSVESEITQNKTDPKPGQADPKPNQPF) are disordered. Residues Asn-347 and Asn-396 are each glycosylated (N-linked (GlcNAc...) asparagine; by host). Residues 406–422 (LGIAGLVLVGVILYVCL) traverse the membrane as a helical segment. Topologically, residues 423-442 (RRKKELKVCTERLDSPTLDL) are intravirion.

This sequence belongs to the herpesviridae glycoprotein D family.

It is found in the virion membrane. Functionally, envelope glycoprotein that binds to host cell entry receptors, promoting the virus entry into host cells. May trigger fusion with host membrane, by recruiting the fusion machinery composed of gB and gH/gL. The chain is Envelope glycoprotein D (gD) from Equine herpesvirus 1 (strain Kentucky A) (EHV-1).